The sequence spans 506 residues: UDP-N-acetylmuramoylalanine--D-glutamate ligase (506 aa).

ATP is bound at residue 128–134; sequence GTNGKTT.

It belongs to the MurCDEF family.

Its subcellular location is the cytoplasm. It carries out the reaction UDP-N-acetyl-alpha-D-muramoyl-L-alanine + D-glutamate + ATP = UDP-N-acetyl-alpha-D-muramoyl-L-alanyl-D-glutamate + ADP + phosphate + H(+). It functions in the pathway cell wall biogenesis; peptidoglycan biosynthesis. Its function is as follows. Cell wall formation. Catalyzes the addition of glutamate to the nucleotide precursor UDP-N-acetylmuramoyl-L-alanine (UMA). This is UDP-N-acetylmuramoylalanine--D-glutamate ligase from Albidiferax ferrireducens (strain ATCC BAA-621 / DSM 15236 / T118) (Rhodoferax ferrireducens).